A 143-amino-acid chain; its full sequence is Nucleoside diphosphate kinase (143 aa).

ATP-binding residues include Lys-11, Phe-59, Arg-87, Thr-93, Arg-104, and Asn-114. The active-site Pros-phosphohistidine intermediate is the His-117.

This sequence belongs to the NDK family. In terms of assembly, homotetramer. The cofactor is Mg(2+).

It localises to the cytoplasm. The catalysed reaction is a 2'-deoxyribonucleoside 5'-diphosphate + ATP = a 2'-deoxyribonucleoside 5'-triphosphate + ADP. It carries out the reaction a ribonucleoside 5'-diphosphate + ATP = a ribonucleoside 5'-triphosphate + ADP. Functionally, major role in the synthesis of nucleoside triphosphates other than ATP. The ATP gamma phosphate is transferred to the NDP beta phosphate via a ping-pong mechanism, using a phosphorylated active-site intermediate. The chain is Nucleoside diphosphate kinase from Shewanella denitrificans (strain OS217 / ATCC BAA-1090 / DSM 15013).